Here is a 338-residue protein sequence, read N- to C-terminus: 1-aminocyclopropane-1-carboxylate deaminase (338 aa).

Lysine 51 carries the post-translational modification N6-(pyridoxal phosphate)lysine. The active-site Nucleophile is serine 78.

This sequence belongs to the ACC deaminase/D-cysteine desulfhydrase family. In terms of assembly, homotrimer. It depends on pyridoxal 5'-phosphate as a cofactor.

The catalysed reaction is 1-aminocyclopropane-1-carboxylate + H2O = 2-oxobutanoate + NH4(+). Catalyzes a cyclopropane ring-opening reaction, the irreversible conversion of 1-aminocyclopropane-1-carboxylate (ACC) to ammonia and alpha-ketobutyrate. Allows growth on ACC as a nitrogen source. This Burkholderia orbicola (strain MC0-3) protein is 1-aminocyclopropane-1-carboxylate deaminase.